Consider the following 116-residue polypeptide: Iron-sulfur cluster insertion protein ErpA (116 aa).

Iron-sulfur cluster-binding residues include cysteine 44, cysteine 108, and cysteine 110.

The protein belongs to the HesB/IscA family. As to quaternary structure, homodimer. Iron-sulfur cluster serves as cofactor.

Required for insertion of 4Fe-4S clusters for at least IspG. The sequence is that of Iron-sulfur cluster insertion protein ErpA from Shewanella oneidensis (strain ATCC 700550 / JCM 31522 / CIP 106686 / LMG 19005 / NCIMB 14063 / MR-1).